Consider the following 486-residue polypeptide: ATP synthase subunit beta (486 aa).

Position 164–171 (164–171 (GGAGVGKT)) interacts with ATP.

This sequence belongs to the ATPase alpha/beta chains family. F-type ATPases have 2 components, CF(1) - the catalytic core - and CF(0) - the membrane proton channel. CF(1) has five subunits: alpha(3), beta(3), gamma(1), delta(1), epsilon(1). CF(0) has four main subunits: a(1), b(1), b'(1) and c(9-12).

Its subcellular location is the cellular thylakoid membrane. It carries out the reaction ATP + H2O + 4 H(+)(in) = ADP + phosphate + 5 H(+)(out). In terms of biological role, produces ATP from ADP in the presence of a proton gradient across the membrane. The catalytic sites are hosted primarily by the beta subunits. The protein is ATP synthase subunit beta of Prochlorococcus marinus (strain MIT 9215).